A 526-amino-acid chain; its full sequence is Probable feruloyl esterase B-2 (526 aa).

The N-terminal stretch at Met-1–Ala-18 is a signal peptide. Disulfide bonds link Cys-27-Cys-74 and Cys-62-Cys-113. A glycan (N-linked (GlcNAc...) asparagine) is linked at Asn-52. An N-linked (GlcNAc...) asparagine glycan is attached at Asn-137. Disulfide bonds link Cys-186-Cys-441, Cys-255-Cys-272, Cys-281-Cys-291, and Cys-503-Cys-525. Ser-187 (acyl-ester intermediate) is an active-site residue. N-linked (GlcNAc...) asparagine glycosylation is present at Asn-233. Ca(2+) contacts are provided by Asp-256, Asp-259, Ala-261, Asp-263, and Ile-265. Catalysis depends on charge relay system residues Asp-400 and His-440. An N-linked (GlcNAc...) asparagine glycan is attached at Asn-516.

It belongs to the tannase family.

Its subcellular location is the secreted. The enzyme catalyses feruloyl-polysaccharide + H2O = ferulate + polysaccharide.. In terms of biological role, involved in degradation of plant cell walls. Hydrolyzes the feruloyl-arabinose ester bond in arabinoxylans as well as the feruloyl-galactose and feruloyl-arabinose ester bonds in pectin. The chain is Probable feruloyl esterase B-2 (faeB-2) from Aspergillus fumigatus (strain ATCC MYA-4609 / CBS 101355 / FGSC A1100 / Af293) (Neosartorya fumigata).